The chain runs to 280 residues: Purine nucleoside phosphorylase (280 aa).

Phosphate is bound by residues S15 and 55–56; that span reads RH. M194 serves as a coordination point for substrate. Residue T195 coordinates phosphate. 218–220 lines the substrate pocket; sequence DLD.

It belongs to the PNP/MTAP phosphorylase family. MTAP subfamily. As to quaternary structure, homohexamer. Dimer of a homotrimer.

The catalysed reaction is a purine D-ribonucleoside + phosphate = a purine nucleobase + alpha-D-ribose 1-phosphate. It functions in the pathway purine metabolism; purine nucleoside salvage. Its function is as follows. Purine nucleoside phosphorylase involved in purine salvage. This Streptomyces coelicolor (strain ATCC BAA-471 / A3(2) / M145) protein is Purine nucleoside phosphorylase.